The chain runs to 71 residues: BBSome-interacting protein 1 (71 aa).

This sequence belongs to the BBIP10 family.

It localises to the cell projection. It is found in the cilium. Its subcellular location is the cytoplasm. Required for primary cilia assembly. The polypeptide is BBSome-interacting protein 1 (bbip1) (Nematostella vectensis (Starlet sea anemone)).